Consider the following 362-residue polypeptide: Putative integrase ORF3 (362 aa).

Residues 179 to 359 (YEVKEIGLLQ…TPFNFLNSLS (181 aa)) form the Integrase catalytic domain. Aspartate 190 and aspartate 256 together coordinate Mg(2+).

This sequence belongs to the plectrovirus integrase ORF3 family.

In terms of biological role, this protein may encode an integrase, which is necessary for integration of the viral DNA into host genome. This chain is Putative integrase ORF3, found in Spiroplasma melliferum (SpV1).